The following is a 739-amino-acid chain: Cleavage and polyadenylation specificity factor subunit 2 (739 aa).

A compositionally biased stretch (basic and acidic residues) spans 411-423 (VKEEETKASHGSD). The disordered stretch occupies residues 411–430 (VKEEETKASHGSDDNSSEPM).

The protein belongs to the metallo-beta-lactamase superfamily. RNA-metabolizing metallo-beta-lactamase-like family. CPSF2/YSH1 subfamily. As to quaternary structure, component of the CPSF complex, at least composed of CPSF160, CPSF100, CPSF73-I, CPSF73-II, CPSF30, FY and FIPS5. Forms a complex with cleavage and polyadenylation specificity factor (CPSF) subunits FY, PAPS2, CSTF50, CPSF30, CPSF73-I, CPSF73-II and CPSF160.

It is found in the nucleus. The protein resides in the cytoplasm. Its function is as follows. CPSF plays a key role in pre-mRNA 3'-end formation, recognizing the AAUAAA signal sequence and interacting with poly(A)polymerase and other factors to bring about cleavage and poly(A) addition. Required for antisense-RNA-mediated gene silencing. The chain is Cleavage and polyadenylation specificity factor subunit 2 (CPSF100) from Arabidopsis thaliana (Mouse-ear cress).